Reading from the N-terminus, the 68-residue chain is Putative protein YfaH (68 aa).

The sequence is that of Putative protein YfaH (yfaH) from Escherichia coli (strain K12).